A 279-amino-acid polypeptide reads, in one-letter code: Thymidylate synthase (279 aa).

132-133 (RR) is a binding site for dUMP. Cys-153 (nucleophile) is an active-site residue. DUMP is bound by residues 178 to 181 (RSND), Asn-189, and 219 to 221 (HIY). Position 181 (Asp-181) interacts with (6R)-5,10-methylene-5,6,7,8-tetrahydrofolate. Residue Ala-278 coordinates (6R)-5,10-methylene-5,6,7,8-tetrahydrofolate.

It belongs to the thymidylate synthase family. Bacterial-type ThyA subfamily. In terms of assembly, homodimer.

Its subcellular location is the cytoplasm. The catalysed reaction is dUMP + (6R)-5,10-methylene-5,6,7,8-tetrahydrofolate = 7,8-dihydrofolate + dTMP. It functions in the pathway pyrimidine metabolism; dTTP biosynthesis. In terms of biological role, catalyzes the reductive methylation of 2'-deoxyuridine-5'-monophosphate (dUMP) to 2'-deoxythymidine-5'-monophosphate (dTMP) while utilizing 5,10-methylenetetrahydrofolate (mTHF) as the methyl donor and reductant in the reaction, yielding dihydrofolate (DHF) as a by-product. This enzymatic reaction provides an intracellular de novo source of dTMP, an essential precursor for DNA biosynthesis. In Lactococcus lactis subsp. cremoris (strain SK11), this protein is Thymidylate synthase.